The following is a 511-amino-acid chain: GMP synthase [glutamine-hydrolyzing] (511 aa).

Positions 5–195 constitute a Glutamine amidotransferase type-1 domain; that stretch reads DILVLDFGSQ…AKYACNCESV (191 aa). Cys-82 acts as the Nucleophile in catalysis. Residues His-169 and Glu-171 contribute to the active site. Residues 196 to 386 enclose the GMPS ATP-PPase domain; that stretch reads WNMGSFAKTQ…LGLSKEVVYR (191 aa). 223–229 contributes to the ATP binding site; the sequence is SGGVDSS.

In terms of assembly, homodimer.

The catalysed reaction is XMP + L-glutamine + ATP + H2O = GMP + L-glutamate + AMP + diphosphate + 2 H(+). Its pathway is purine metabolism; GMP biosynthesis; GMP from XMP (L-Gln route): step 1/1. Catalyzes the synthesis of GMP from XMP. The polypeptide is GMP synthase [glutamine-hydrolyzing] (Campylobacter jejuni subsp. doylei (strain ATCC BAA-1458 / RM4099 / 269.97)).